Consider the following 188-residue polypeptide: NAD(P)H-quinone oxidoreductase subunit J (188 aa).

Residues 1–12 (MSETPSKQTAAS) show a composition bias toward polar residues. The interval 1–23 (MSETPSKQTAASDETGAVVAPEP) is disordered.

It belongs to the complex I 30 kDa subunit family. As to quaternary structure, NDH-1 can be composed of about 15 different subunits; different subcomplexes with different compositions have been identified which probably have different functions.

It is found in the cellular thylakoid membrane. It catalyses the reaction a plastoquinone + NADH + (n+1) H(+)(in) = a plastoquinol + NAD(+) + n H(+)(out). It carries out the reaction a plastoquinone + NADPH + (n+1) H(+)(in) = a plastoquinol + NADP(+) + n H(+)(out). Its function is as follows. NDH-1 shuttles electrons from an unknown electron donor, via FMN and iron-sulfur (Fe-S) centers, to quinones in the respiratory and/or the photosynthetic chain. The immediate electron acceptor for the enzyme in this species is believed to be plastoquinone. Couples the redox reaction to proton translocation, and thus conserves the redox energy in a proton gradient. Cyanobacterial NDH-1 also plays a role in inorganic carbon-concentration. The protein is NAD(P)H-quinone oxidoreductase subunit J of Synechococcus sp. (strain CC9605).